A 35-amino-acid chain; its full sequence is Potassium channel toxin alpha-KTx 6.12 (35 aa).

Q1 bears the Pyrrolidone carboxylic acid mark. 4 cysteine pairs are disulfide-bonded: C4/C24, C10/C29, C14/C31, and C19/C34. Position 35 is a lysine amide (K35).

This sequence belongs to the short scorpion toxin superfamily. Potassium channel inhibitor family. Alpha-KTx 06 subfamily. As to quaternary structure, monomer. As to expression, expressed by the venom gland.

It is found in the secreted. Functionally, high affinity blocker of Kv1.3/KCNA3 channels of human T cells. Blocks Kv1.2/KCNA2 with an order of magnitude smaller than for Kv1.3/KCNA3. The polypeptide is Potassium channel toxin alpha-KTx 6.12 (Anuroctonus phaiodactylus (Mafia scorpion)).